The sequence spans 251 residues: Flagellar basal-body rod protein FlgF (251 aa).

Belongs to the flagella basal body rod proteins family. In terms of assembly, the basal body constitutes a major portion of the flagellar organelle and consists of five rings (E,L,P,S, and M) mounted on a central rod. The rod consists of about 26 subunits of FlgG in the distal portion, and FlgB, FlgC and FlgF are thought to build up the proximal portion of the rod with about 6 subunits each.

It localises to the bacterial flagellum basal body. The chain is Flagellar basal-body rod protein FlgF (flgF) from Salmonella typhimurium (strain LT2 / SGSC1412 / ATCC 700720).